Here is a 143-residue protein sequence, read N- to C-terminus: uncharacterized protein (143 aa).

The N-terminal stretch at 1–16 is a signal peptide; sequence MSRNRLFLVAGSLAVA. A helical membrane pass occupies residues 114-134; it reads GAYVFLGPGFTPGSPSGGSGG.

It localises to the membrane. This is an uncharacterized protein from Mycobacterium tuberculosis (strain CDC 1551 / Oshkosh).